Reading from the N-terminus, the 291-residue chain is Phosphatidylglycerol--prolipoprotein diacylglyceryl transferase (291 aa).

A run of 7 helical transmembrane segments spans residues 21-41 (VALH…MWLA), 60-80 (LLYA…VLFY), 96-116 (WDGG…MIIF), 130-150 (FIAP…FING), 198-218 (SQLY…NLFI), 225-245 (GAVS…VEFF), and 260-280 (ISMG…MMVW). A 1,2-diacyl-sn-glycero-3-phospho-(1'-sn-glycerol) is bound at residue arginine 143.

Belongs to the Lgt family.

Its subcellular location is the cell inner membrane. The catalysed reaction is L-cysteinyl-[prolipoprotein] + a 1,2-diacyl-sn-glycero-3-phospho-(1'-sn-glycerol) = an S-1,2-diacyl-sn-glyceryl-L-cysteinyl-[prolipoprotein] + sn-glycerol 1-phosphate + H(+). The protein operates within protein modification; lipoprotein biosynthesis (diacylglyceryl transfer). In terms of biological role, catalyzes the transfer of the diacylglyceryl group from phosphatidylglycerol to the sulfhydryl group of the N-terminal cysteine of a prolipoprotein, the first step in the formation of mature lipoproteins. In Salmonella agona (strain SL483), this protein is Phosphatidylglycerol--prolipoprotein diacylglyceryl transferase.